An 860-amino-acid chain; its full sequence is Nucleolar MIF4G domain-containing protein 1 (860 aa).

3 disordered regions span residues 1–172 (MAAS…AARK), 191–211 (RCLG…PLSF), and 226–339 (GKNS…EKYI). The interval 1-269 (MAASRSAGEA…EEEEEGDVEK (269 aa)) is necessary for nucleolar localization and for targeting PPP1CA to the nucleolus. The span at 20 to 31 (VRMKRRGGRGPR) shows a compositional bias: basic residues. At S57 the chain carries Phosphoserine. The segment covering 77 to 99 (GGRKSRKELRKEKRHLRKARRLQ) has biased composition (basic residues). Basic and acidic residues predominate over residues 115 to 131 (GAEEASGHRQDTEERAR). S139 bears the Phosphoserine mark. The span at 142 to 151 (RKPRPSRVKA) shows a compositional bias: basic residues. Positions 152–169 (KATAATAKTRPSAAATAA) are enriched in low complexity. Acidic residues-rich tracts occupy residues 249–267 (SDLE…EGDV) and 278–293 (AQSE…EQGE). The short motif at 307-310 (RVRF) is the Required for efficient binding to PPP1CA and for targeting PPP1CA to the nucleolus element. Residues 312–325 (EDEEKSENSSEDGD) show a composition bias toward acidic residues. 3 positions are modified to phosphoserine: S317, S320, and S321. Positions 362–559 (KKHVKGLLNR…ETMLALKNND (198 aa)) constitute an MIF4G domain. Residues 654 to 770 (DIRRNIFCTI…SLSILKVVEF (117 aa)) form the MI domain.

Belongs to the CWC22 family. As to quaternary structure, may interact with EIF4A1, EIF4A2 and EIF4A3. Interacts with PPP1CA and PPP1CC. As to expression, expressed in heart and skeletal muscle.

Its subcellular location is the nucleus. The protein localises to the nucleolus. Functionally, plays a role in targeting PPP1CA to the nucleolus. The sequence is that of Nucleolar MIF4G domain-containing protein 1 (NOM1) from Homo sapiens (Human).